The primary structure comprises 367 residues: Cystinosin (367 aa).

The signal sequence occupies residues 1–22 (MRRNWLLILTLFLLMFIEKYES). The Lumenal portion of the chain corresponds to 23-125 (TVSLTAPPTV…LVIHSRIVSI (103 aa)). N-linked (GlcNAc...) asparagine glycosylation is found at asparagine 36, asparagine 51, asparagine 66, asparagine 84, asparagine 104, and asparagine 107. Residues 123–189 (VSIINQVIGW…LLWVPYIQEE (67 aa)) form the PQ-loop 1 domain. A helical membrane pass occupies residues 126-150 (INQVIGWIYFMAWSVSFYPQVIQNW). Topologically, residues 151-159 (RRKSVIGLS) are cytoplasmic. The chain crosses the membrane as a helical span at residues 160–179 (FDFLALNLTGFVAYSVFNIG). Residue asparagine 166 participates in L-cystine binding. Over 180–202 (LLWVPYIQEEFLLKYPNGVNPVD) the chain is Lumenal. A helical membrane pass occupies residues 203–225 (SNDAFFSLHAVALTLIVILQCCL). A H(+)-binding site is contributed by aspartate 205. Residues 226-234 (YERGNQRVS) are Cytoplasmic-facing. Residues 235–257 (WPSIGFLVLAWLFVLVTMIVAAV) form a helical membrane-spanning segment. Over 258-263 (GITTWL) the chain is Lumenal. In terms of domain architecture, PQ-loop 2 spans 263–328 (LQFLFCFSYI…QSYNNDQWTL (66 aa)). Residues 264-289 (QFLFCFSYIKLIITLIKYFPQAYMNF) traverse the membrane as a helical segment. Lysine 273, lysine 280, and tyrosine 281 together coordinate L-cystine. The Cytoplasmic portion of the chain corresponds to 290-298 (YYKSTKGWS). A helical transmembrane segment spans residues 299–308 (IGGVLLDFTG). Residue aspartate 305 coordinates L-cystine. A H(+)-binding site is contributed by aspartate 305. Residues 309–331 (GSFSLLQMFLQSYNNDQWTLIFG) are Lumenal-facing. A helical transmembrane segment spans residues 332–354 (DPTKFGLGVFTIFFDVVFFIQHF). Aspartate 346 contributes to the H(+) binding site. Topologically, residues 355–367 (YLYRKKPGYDQLN) are cytoplasmic. Positions 362–366 (GYDQL) match the Lysosomal targeting motif motif.

It belongs to the cystinosin family. In terms of assembly, interacts with components of the V-ATPase complex. Interacts with components of the Ragulator complex. Interacts with RRAGA/RagA and RRAGC/RagC. Interacts with AP-3 complex subunit mu (AP3M1 or AP3M2).

The protein localises to the lysosome membrane. It is found in the melanosome membrane. It catalyses the reaction L-cystine(out) + H(+)(out) = L-cystine(in) + H(+)(in). With respect to regulation, switches between a lumen- and a cytosol-open conformation: pH induces conformational changes and shifts the equilibrium to facilitate the transition between the lumen- and cytosol-open conformation, thereby promoting cystine transport. Protonation of specific aspartate residues (Asp-205, Asp-305 and Asp-346) favors the cytosol-open conformation. Functionally, cystine/H(+) symporter that mediates export of cystine, the oxidized dimer of cysteine, from lysosomes. Plays an important role in melanin synthesis by catalyzing cystine export from melanosomes, possibly by inhibiting pheomelanin synthesis. In addition to cystine export, also acts as a positive regulator of mTORC1 signaling in kidney proximal tubular cells, via interactions with components of the v-ATPase and Ragulator complexes. Also involved in small GTPase-regulated vesicle trafficking and lysosomal localization of LAMP2A, independently of cystine transporter activity. The protein is Cystinosin of Mus musculus (Mouse).